The primary structure comprises 648 residues: Penicillin-binding protein PbpB (648 aa).

Residues 1 to 35 form a disordered region; sequence MSRRGDRPRTPAQPRKKARVDQPRSARTRRTRVSE. Residues 52–72 traverse the membrane as a helical segment; it reads GNLAILAVLVIAAVQLFMLQV. Ser355 functions as the Acyl-ester intermediate in the catalytic mechanism.

This sequence belongs to the transpeptidase family. In terms of assembly, interacts with Wag31.

The protein resides in the cell membrane. This Mycolicibacterium smegmatis (strain ATCC 700084 / mc(2)155) (Mycobacterium smegmatis) protein is Penicillin-binding protein PbpB (pbpB).